Reading from the N-terminus, the 258-residue chain is UPF0246 protein NTHI1156 (258 aa).

The protein belongs to the UPF0246 family.

In Haemophilus influenzae (strain 86-028NP), this protein is UPF0246 protein NTHI1156.